The sequence spans 2907 residues: MGRRRRLCLQPYFVWLGCVALWAQGTDGQPQPPPPKTLRPQPPPQQVRPAVAGSEGGFMGPEYRDEGAVAASRVRRRGQQEILRGPNVCGSRFHSYCCPGWKTLPGGNQCIVPICRNSCGDGFCSRPNMCTCSSGQISPTCGAKSIQQCSVRCMNGGTCADDHCQCQKGYIGTYCGQPVCENGCQNGGRCIGPNRCACVYGFTGPQCERDYRTGPCFTQVNNQMCQGQLTGIVCTKTLCCATIGRAWGHPCEMCPAQPQPCRRGFIPNIRTGACQDVDECQAIPGLCQGGNCINTVGSFECRCPAGHKQSETTQKCEDIDECSVIPGVCETGDCSNTVGSYFCLCPRGFVTSTDGSRCIDQRAGTCFSGLVNGRCAQELPGRMAKAQCCCEPGRCWSIGTIPEACPVRGSEEYRRLCLDGLPMGGIPGSSVSRPGGTGSTGNGYGPGGTGFLPIPGDNGFSPGVGGAGVGAGGQGPIITGLTILNQTIDICKHHANLCLNGRCIPTVSSYRCECNMGYKQDANGDCIDVDECTSNPCSNGDCVNTPGSYYCKCHAGFQRTPTKQACIDIDECIQNGVLCKNGRCVNTDGSFQCICNAGFELTTDGKNCVDHDECTTTNMCLNGMCINEDGSFKCVCKPGFILAPNGRYCTDVDECQTPGICMNGHCINNEGSFRCDCPPGLAVGVDGRVCVDTHMRSTCYGEIKKGVCVRPFPGAVTKSECCCANPDYGFGEPCQPCPAKNSAEFHGLCSSGIGITVDGRDINECALDPDICANGICENLRGSYRCNCNSGYEPDASGRNCIDIDECLVNRLLCDNGLCRNTPGSYSCTCPPGYVFRTETETCEDVNECESNPCVNGACRNNLGSFHCECSPGSKLSSTGLICIDSLKGTCWLNIQDNRCEVNINGATLKSECCATLGAAWGSPCERCELDAACPRGFARIKGVTCEDVNECEVFPGVCPNGRCVNSKGSFHCECPEGLTLDGTGRVCLDIRMEHCFLKWDEDECIHPVPGKFRMDACCCAVGAAWGTECEECPKPGTKEYETLCPRGPGFANRGDILTGRPFYKDINECKAFPGMCTYGKCRNTIGSFKCRCNNGFALDMEERNCTDIDECRISPDLCGSGICVNTPGSFECECFEGYESGFMMMKNCMDIDECERNPLLCRGGTCVNTEGSFQCDCPLGHELSPSREDCVDINECSLSDNLCRNGKCVNMIGTYQCSCNPGYQATPDRQGCTDIDECMIMNGGCDTQCTNSEGSYECSCSEGYALMPDGRSCADIDECENNPDICDGGQCTNIPGEYRCLCYDGFMASMDMKTCIDVNECDLNPNICMFGECENTKGSFICHCQLGYSVKKGTTGCTDVDECEIGAHNCDMHASCLNVPGSFKCSCREGWVGNGIKCIDLDECANGTHQCSINAQCVNTPGSYRCACSEGFTGDGFTCSDVDECAENTNLCENGQCLNVPGAYRCECEMGFTPASDSRSCQDIDECSFQNICVFGTCNNLPGMFHCICDDGYELDRTGGNCTDIDECADPINCVNGLCVNTPGRYECNCPPDFQLNPTGVGCVDNRVGNCYLKFGPRGDGSLSCNTEVGVGVSRSSCCCSLGKAWGNPCETCPPVNSTEYYTLCPGGEGFRPNPITIILEDIDECQELPGLCQGGNCINTFGSFQCECPQGYYLSEETRICEDIDECFAHPGVCGPGTCYNTLGNYTCICPPEYMQVNGGHNCMDMRKSFCYRSYNGTTCENELPFNVTKRMCCCTYNVGKAWNKPCEPCPTPGTADFKTICGNIPGFTFDIHTGKAVDIDECKEIPGICANGVCINQIGSFRCECPTGFSYNDLLLVCEDIDECSNGDNLCQRNADCINSPGSYRCECAAGFKLSPNGACVDRNECLEIPNVCSHGLCVDLQGSYQCICNNGFKASQDQTMCMDVDECERHPCGNGTCKNTVGSYNCLCYPGFELTHNNDCLDIDECSSFFGQVCRNGRCFNEIGSFKCLCNEGYELTPDGKNCIDTNECVALPGSCSPGTCQNLEGSFRCICPPGYEVRSENCIDINECDEDPNICLFGSCTNTPGGFQCICPPGFVLSDNGRRCFDTRQSFCFTNFENGKCSVPKAFNTTKAKCCCSKMPGEGWGDPCELCPKDDEVAFQDLCPYGHGTVPSLHDTREDVNECLESPGICSNGQCINTDGSFRCECPMGYNLDYTGVRCVDTDECSIGNPCGNGTCTNVIGSFECTCNEGFEPGPMMNCEDINECAQNPLLCAFRCMNTFGSYECTCPVGYALREDQKMCKDLDECAEGLHDCESRGMMCKNLIGTFMCICPPGMARRPDGEGCVDENECRTKPGICENGRCVNIIGSYRCECNEGFQSSSSGTECLDNRQGLCFAEVLQTMCQMASSSRNLVTKSECCCDGGRGWGHQCELCPLPGTAQYKKICPHGPGYATDGRDIDECKVMPSLCTNGQCVNTMGSFRCFCKVGYTTDISGTACVDLDECSQSPKPCNFICKNTKGSYQCSCPRGYVLQEDGKTCKDLDECQTKQHNCQFLCVNTLGGFTCKCPPGFTQHHTACIDNNECGSQPSLCGAKGICQNTPGSFSCECQRGFSLDASGLNCEDVDECDGNHRCQHGCQNILGGYRCGCPQGYVQHYQWNQCVDENECSNPGACGSASCYNTLGSYKCACPSGFSFDQFSSACHDVNECSSSKNPCSYGCSNTEGGYLCGCPPGYFRVGQGHCVSGMGFNKGQYLSVDAEAEDDENALSPEACYECKINGYTKKDGRRKRSAQEPEPASAEEQISLESVAMDSPVNMKFNLSGLGSKEHILELVPAIEPLNNHIRYVISQGNEDGVFRIHQRNGLSYLHTAKKKLAPGTYTLEITSIPLYGKKELRKLEEHNEDDYLLGVLGEALRMRLQIQLY.

A signal peptide spans 1-28; sequence MGRRRRLCLQPYFVWLGCVALWAQGTDG. Residues 26–58 are disordered; the sequence is TDGQPQPPPPKTLRPQPPPQQVRPAVAGSEGGF. The propeptide occupies 29 to 77; that stretch reads QPQPPPPKTLRPQPPPQQVRPAVAGSEGGFMGPEYRDEGAVAASRVRRR. The segment covering 30-46 has biased composition (pro residues); the sequence is PQPPPPKTLRPQPPPQQ. EGF-like domains are found at residues 111–142, 145–176, and 176–208; these read IVPICRNSCGDGFCSRPNMCTCSSGQISPTCG, SIQQCSVRCMNGGTCADDHCQCQKGYIGTYCG, and GQPVCENGCQNGGRCIGPNRCACVYGFTGPQCE. 9 disulfides stabilise this stretch: Cys115–Cys124, Cys119–Cys130, Cys132–Cys141, Cys149–Cys159, Cys153–Cys164, Cys166–Cys175, Cys180–Cys190, Cys184–Cys196, and Cys198–Cys207. Residues 149 to 359 are interaction with MFAP4; that stretch reads CSVRCMNGGT…VTSTDGSRCI (211 aa). Positions 214 to 266 constitute a TB 1 domain; the sequence is GPCFTQVNNQMCQGQLTGIVCTKTLCCATIGRAWGHPCEMCPAQPQPCRRGFI. One can recognise an EGF-like 4; calcium-binding domain in the interval 276 to 317; it reads DVDECQAIPGLCQGGNCINTVGSFECRCPAGHKQSETTQKCE. Disulfide bonds link Cys280–Cys292, Cys287–Cys301, Cys303–Cys316, Cys322–Cys334, Cys329–Cys343, and Cys345–Cys358. Residue Ser298 is glycosylated (O-linked (Glc) serine). The EGF-like 5; calcium-binding domain occupies 318–359; the sequence is DIDECSVIPGVCETGDCSNTVGSYFCLCPRGFVTSTDGSRCI. Ser340 is a glycosylation site (O-linked (Glc) serine). Residues 364–417 form the TB 2 domain; it reads GTCFSGLVNGRCAQELPGRMAKAQCCCEPGRCWSIGTIPEACPVRGSEEYRRLC. Asn485 carries N-linked (GlcNAc...) asparagine glycosylation. In terms of domain architecture, EGF-like 6 spans 487-527; it reads TIDICKHHANLCLNGRCIPTVSSYRCECNMGYKQDANGDCI. 15 cysteine pairs are disulfide-bonded: Cys491-Cys503, Cys498-Cys512, Cys514-Cys526, Cys532-Cys542, Cys537-Cys551, Cys553-Cys566, Cys572-Cys584, Cys579-Cys593, Cys595-Cys608, Cys614-Cys625, Cys620-Cys634, Cys636-Cys649, Cys655-Cys666, Cys661-Cys675, and Cys677-Cys690. Residue Ser509 is glycosylated (O-linked (Glc) serine). One can recognise an EGF-like 7; calcium-binding domain in the interval 528 to 567; that stretch reads DVDECTSNPCSNGDCVNTPGSYYCKCHAGFQRTPTKQACI. O-linked (Glc) serine glycosylation occurs at Ser548. Residues 568–609 enclose the EGF-like 8; calcium-binding domain; sequence DIDECIQNGVLCKNGRCVNTDGSFQCICNAGFELTTDGKNCV. Ser590 is a glycosylation site (O-linked (Glc) serine). The region spanning 610–650 is the EGF-like 9; calcium-binding domain; that stretch reads DHDECTTTNMCLNGMCINEDGSFKCVCKPGFILAPNGRYCT. The O-linked (Glc) serine glycan is linked to Ser631. In terms of domain architecture, EGF-like 10; calcium-binding spans 651-691; that stretch reads DVDECQTPGICMNGHCINNEGSFRCDCPPGLAVGVDGRVCV. Residue Ser672 is glycosylated (O-linked (Glc) serine). The TB 3 domain maps to 697–749; sequence STCYGEIKKGVCVRPFPGAVTKSECCCANPDYGFGEPCQPCPAKNSAEFHGLC. Residues 761–802 form the EGF-like 11; calcium-binding domain; it reads DINECALDPDICANGICENLRGSYRCNCNSGYEPDASGRNCI. Cystine bridges form between Cys765-Cys777, Cys772-Cys786, Cys788-Cys801, Cys807-Cys819, Cys814-Cys828, Cys830-Cys843, Cys849-Cys859, Cys854-Cys868, and Cys870-Cys883. The 42-residue stretch at 803–844 folds into the EGF-like 12; calcium-binding domain; sequence DIDECLVNRLLCDNGLCRNTPGSYSCTCPPGYVFRTETETCE. A glycan (O-linked (Glc) serine) is linked at Ser825. The region spanning 845 to 883 is the EGF-like 13; calcium-binding domain; that stretch reads DVNECESNPCVNGACRNNLGSFHCECSPGSKLSSTGLIC. A glycan (O-linked (Glc) serine) is linked at Ser865. One can recognise a TB 4 domain in the interval 889–940; it reads GTCWLNIQDNRCEVNINGATLKSECCATLGAAWGSPCERCELDAACPRGFAR. The region spanning 948 to 989 is the EGF-like 14; calcium-binding domain; it reads DVNECEVFPGVCPNGRCVNSKGSFHCECPEGLTLDGTGRVCL. 3 disulfides stabilise this stretch: Cys952-Cys964, Cys959-Cys973, and Cys975-Cys988. The O-linked (Glc) serine glycan is linked to Ser970. In terms of domain architecture, TB 5 spans 994-1045; it reads EHCFLKWDEDECIHPVPGKFRMDACCCAVGAAWGTECEECPKPGTKEYETLC. Positions 1066 to 1107 constitute an EGF-like 15; calcium-binding domain; sequence DINECKAFPGMCTYGKCRNTIGSFKCRCNNGFALDMEERNCT. Intrachain disulfides connect Cys1070–Cys1082, Cys1077–Cys1091, Cys1093–Cys1106, Cys1112–Cys1124, Cys1119–Cys1133, Cys1135–Cys1149, Cys1155–Cys1167, Cys1162–Cys1176, Cys1178–Cys1191, Cys1197–Cys1209, Cys1204–Cys1218, Cys1220–Cys1233, Cys1239–Cys1250, Cys1246–Cys1259, Cys1261–Cys1274, Cys1280–Cys1292, Cys1287–Cys1301, Cys1303–Cys1316, Cys1322–Cys1334, Cys1329–Cys1343, Cys1345–Cys1358, Cys1364–Cys1377, Cys1371–Cys1386, Cys1388–Cys1399, Cys1405–Cys1418, Cys1412–Cys1427, Cys1429–Cys1440, Cys1446–Cys1458, Cys1453–Cys1467, Cys1469–Cys1482, Cys1488–Cys1499, Cys1494–Cys1508, Cys1510–Cys1523, Cys1529–Cys1540, Cys1535–Cys1549, and Cys1551–Cys1564. A glycan (O-linked (Glc) serine) is linked at Ser1088. A glycan (N-linked (GlcNAc...) asparagine) is linked at Asn1105. In terms of domain architecture, EGF-like 16; calcium-binding spans 1108–1150; that stretch reads DIDECRISPDLCGSGICVNTPGSFECECFEGYESGFMMMKNCM. The EGF-like 17; calcium-binding domain occupies 1151-1192; it reads DIDECERNPLLCRGGTCVNTEGSFQCDCPLGHELSPSREDCV. The O-linked (Glc) serine glycan is linked to Ser1173. Positions 1193-1234 constitute an EGF-like 18; calcium-binding domain; the sequence is DINECSLSDNLCRNGKCVNMIGTYQCSCNPGYQATPDRQGCT. Thr1215 carries an O-linked (Glc) threonine glycan. In terms of domain architecture, EGF-like 19; calcium-binding spans 1235 to 1275; it reads DIDECMIMNGGCDTQCTNSEGSYECSCSEGYALMPDGRSCA. Ser1256 carries an O-linked (Glc) serine glycan. One can recognise an EGF-like 20; calcium-binding domain in the interval 1276–1317; the sequence is DIDECENNPDICDGGQCTNIPGEYRCLCYDGFMASMDMKTCI. An EGF-like 21; calcium-binding domain is found at 1318-1359; it reads DVNECDLNPNICMFGECENTKGSFICHCQLGYSVKKGTTGCT. Ser1340 carries an O-linked (Glc) serine glycan. An EGF-like 22; calcium-binding domain is found at 1360–1400; sequence DVDECEIGAHNCDMHASCLNVPGSFKCSCREGWVGNGIKCI. Ser1383 is a glycosylation site (O-linked (Glc) serine). The 41-residue stretch at 1401-1441 folds into the EGF-like 23; calcium-binding domain; that stretch reads DLDECANGTHQCSINAQCVNTPGSYRCACSEGFTGDGFTCS. N-linked (GlcNAc...) asparagine glycosylation is present at Asn1407. Residues 1442–1483 enclose the EGF-like 24; calcium-binding domain; that stretch reads DVDECAENTNLCENGQCLNVPGAYRCECEMGFTPASDSRSCQ. The EGF-like 25; calcium-binding domain occupies 1484–1524; the sequence is DIDECSFQNICVFGTCNNLPGMFHCICDDGYELDRTGGNCT. Asn1522 is a glycosylation site (N-linked (GlcNAc...) asparagine). Residues 1525-1565 enclose the EGF-like 26; calcium-binding domain; sequence DIDECADPINCVNGLCVNTPGRYECNCPPDFQLNPTGVGCV. Positions 1570–1626 constitute a TB 6 domain; the sequence is GNCYLKFGPRGDGSLSCNTEVGVGVSRSSCCCSLGKAWGNPCETCPPVNSTEYYTLC. Asn1618 is a glycosylation site (N-linked (GlcNAc...) asparagine). Residues 1643 to 1684 enclose the EGF-like 27; calcium-binding domain; that stretch reads DIDECQELPGLCQGGNCINTFGSFQCECPQGYYLSEETRICE. 6 disulfides stabilise this stretch: Cys1647–Cys1659, Cys1654–Cys1668, Cys1670–Cys1683, Cys1689–Cys1701, Cys1696–Cys1710, and Cys1712–Cys1725. O-linked (Glc) serine glycosylation occurs at Ser1665. The region spanning 1685–1726 is the EGF-like 28; calcium-binding domain; sequence DIDECFAHPGVCGPGTCYNTLGNYTCICPPEYMQVNGGHNCM. A glycan (N-linked (GlcNAc...) asparagine) is linked at Asn1707. Residues 1728–2164 are interaction with MFAP4; that stretch reads MRKSFCYRSY…VPSLHDTRED (437 aa). A TB 7 domain is found at 1731–1784; sequence SFCYRSYNGTTCENELPFNVTKRMCCCTYNVGKAWNKPCEPCPTPGTADFKTIC. Residues Asn1738 and Asn1749 are each glycosylated (N-linked (GlcNAc...) asparagine). The EGF-like 29; calcium-binding domain maps to 1801–1842; it reads DIDECKEIPGICANGVCINQIGSFRCECPTGFSYNDLLLVCE. Cystine bridges form between Cys1805–Cys1817, Cys1812–Cys1826, Cys1828–Cys1841, Cys1847–Cys1860, Cys1854–Cys1869, Cys1871–Cys1883, Cys1889–Cys1901, Cys1896–Cys1910, Cys1912–Cys1925, Cys1931–Cys1941, Cys1936–Cys1950, Cys1952–Cys1964, Cys1970–Cys1983, Cys1978–Cys1992, Cys1994–Cys2007, Cys2013–Cys2025, Cys2020–Cys2034, Cys2036–Cys2047, Cys2053–Cys2065, Cys2060–Cys2074, and Cys2076–Cys2089. An EGF-like 30; calcium-binding domain is found at 1843–1884; the sequence is DIDECSNGDNLCQRNADCINSPGSYRCECAAGFKLSPNGACV. Ser1866 is a glycosylation site (O-linked (Glc) serine). An EGF-like 31; calcium-binding domain is found at 1885–1926; that stretch reads DRNECLEIPNVCSHGLCVDLQGSYQCICNNGFKASQDQTMCM. Residues 1927–1965 enclose the EGF-like 32; calcium-binding domain; the sequence is DVDECERHPCGNGTCKNTVGSYNCLCYPGFELTHNNDCL. N-linked (GlcNAc...) asparagine glycosylation is present at Asn1938. A glycan (O-linked (Glc) serine) is linked at Ser1947. Residues 1966–2008 form the EGF-like 33; calcium-binding domain; that stretch reads DIDECSSFFGQVCRNGRCFNEIGSFKCLCNEGYELTPDGKNCI. An O-linked (Glc) serine glycan is attached at Ser1989. The EGF-like 34; calcium-binding domain maps to 2009–2048; that stretch reads DTNECVALPGSCSPGTCQNLEGSFRCICPPGYEVRSENCI. One can recognise an EGF-like 35; calcium-binding domain in the interval 2049–2090; sequence DINECDEDPNICLFGSCTNTPGGFQCICPPGFVLSDNGRRCF. Residues 2095–2148 enclose the TB 8 domain; sequence SFCFTNFENGKCSVPKAFNTTKAKCCCSKMPGEGWGDPCELCPKDDEVAFQDLC. Asn2113 is a glycosylation site (N-linked (GlcNAc...) asparagine). The 42-residue stretch at 2164–2205 folds into the EGF-like 36; calcium-binding domain; that stretch reads DVNECLESPGICSNGQCINTDGSFRCECPMGYNLDYTGVRCV. 15 disulfides stabilise this stretch: Cys2168–Cys2180, Cys2175–Cys2189, Cys2191–Cys2204, Cys2210–Cys2221, Cys2216–Cys2230, Cys2232–Cys2244, Cys2250–Cys2261, Cys2257–Cys2270, Cys2272–Cys2285, Cys2291–Cys2305, Cys2298–Cys2314, Cys2316–Cys2329, Cys2335–Cys2347, Cys2342–Cys2356, and Cys2358–Cys2371. O-linked (Glc) serine glycosylation occurs at Ser2186. Positions 2206-2245 constitute an EGF-like 37; calcium-binding domain; it reads DTDECSIGNPCGNGTCTNVIGSFECTCNEGFEPGPMMNCE. Asn2218 is a glycosylation site (N-linked (GlcNAc...) asparagine). The region spanning 2246 to 2286 is the EGF-like 38; calcium-binding domain; the sequence is DINECAQNPLLCAFRCMNTFGSYECTCPVGYALREDQKMCK. An O-linked (Glc) serine glycan is attached at Ser2267. In terms of domain architecture, EGF-like 39; calcium-binding spans 2287–2330; that stretch reads DLDECAEGLHDCESRGMMCKNLIGTFMCICPPGMARRPDGEGCV. The EGF-like 40; calcium-binding domain maps to 2331 to 2372; the sequence is DENECRTKPGICENGRCVNIIGSYRCECNEGFQSSSSGTECL. Ser2353 is a glycosylation site (O-linked (Glc) serine). A TB 9 domain is found at 2377-2430; it reads GLCFAEVLQTMCQMASSSRNLVTKSECCCDGGRGWGHQCELCPLPGTAQYKKIC. The EGF-like 41; calcium-binding domain maps to 2442–2483; sequence DIDECKVMPSLCTNGQCVNTMGSFRCFCKVGYTTDISGTACV. 21 disulfide bridges follow: Cys2446-Cys2458, Cys2453-Cys2467, Cys2469-Cys2482, Cys2488-Cys2499, Cys2495-Cys2508, Cys2510-Cys2523, Cys2529-Cys2540, Cys2536-Cys2549, Cys2551-Cys2562, Cys2568-Cys2581, Cys2575-Cys2590, Cys2592-Cys2605, Cys2611-Cys2621, Cys2617-Cys2630, Cys2632-Cys2645, Cys2651-Cys2662, Cys2657-Cys2671, Cys2673-Cys2686, Cys2692-Cys2703, Cys2699-Cys2712, and Cys2714-Cys2726. A glycan (O-linked (Glc) serine) is linked at Ser2464. An EGF-like 42; calcium-binding domain is found at 2484–2524; sequence DLDECSQSPKPCNFICKNTKGSYQCSCPRGYVLQEDGKTCK. The O-linked (Glc) serine glycan is linked to Ser2505. Residues 2525 to 2563 enclose the EGF-like 43; calcium-binding domain; the sequence is DLDECQTKQHNCQFLCVNTLGGFTCKCPPGFTQHHTACI. One can recognise an EGF-like 44; calcium-binding domain in the interval 2564–2606; the sequence is DNNECGSQPSLCGAKGICQNTPGSFSCECQRGFSLDASGLNCE. Residue Ser2587 is glycosylated (O-linked (Glc) serine). An EGF-like 45; calcium-binding domain is found at 2607–2646; the sequence is DVDECDGNHRCQHGCQNILGGYRCGCPQGYVQHYQWNQCV. An EGF-like 46; calcium-binding domain is found at 2647-2687; sequence DENECSNPGACGSASCYNTLGSYKCACPSGFSFDQFSSACH. Ser2668 is a glycosylation site (O-linked (Glc) serine). The EGF-like 47; calcium-binding domain occupies 2688-2727; sequence DVNECSSSKNPCSYGCSNTEGGYLCGCPPGYFRVGQGHCV. The N-linked (GlcNAc...) asparagine glycan is linked to Asn2803.

It belongs to the fibrillin family. Interacts with BMP2, BMP4, BMP7, BMP10 and GDF5. Interacts with MFAP2 and MFAP5. Interacts with ADAMTSL5. Interacts with MFAP4. Post-translationally, N-glycosylated. In terms of processing, O-glycosylated on serine residues by POGLUT2 and POGLUT3. In terms of tissue distribution, widely expressed.

The protein localises to the secreted. It is found in the extracellular space. The protein resides in the extracellular matrix. In terms of biological role, fibrillins are structural components of 10-12 nm extracellular calcium-binding microfibrils, which occur either in association with elastin or in elastin-free bundles. Fibrillin-2-containing microfibrils regulate the early process of elastic fiber assembly. Regulates osteoblast maturation by controlling TGF-beta bioavailability and calibrating TGF-beta and BMP levels, respectively. Its function is as follows. Hormone secreted by trophoblasts that promotes trophoblast invasiveness. Has glucogenic activity: is able to increase plasma glucose levels. The polypeptide is Fibrillin-2 (Mus musculus (Mouse)).